The chain runs to 322 residues: MREPAFSFRLHLFAAMILLVDVFSALSITTQTFRNVQRHSTDRQLRARDSQAKNYVIRDEERMPLRKLPYDLNLSLSSPPVATLRTALELLYPQAGPSQLWHFEFVTQMKRELSVMQSHPKKLIFDQLIGAMRSMNRNMHMKWNHASDISELSPYTQLILPIALKLRQRLSEGASNDADWMSLLMRLIPYGFLRKEVELLLRTAGYDNVQNYIALYDQMLSKVSAEDTLKFQLLDSNIAPNFQELNKEFLYRSVSLLASKTDGVTADSIVQTTCWSFILIQLTKAKYPQDELQKILEDSMPAEKVVAVMKSYKEGFPNPAHR.

Residues 1–25 (MREPAFSFRLHLFAAMILLVDVFSA) form the signal peptide. The RxLR-dEER motif lies at 43–62 (RQLRARDSQAKNYVIRDEER). Asparagine 73 is a glycosylation site (N-linked (GlcNAc...) asparagine).

The protein belongs to the RxLR effector family.

The protein resides in the secreted. It is found in the host cytoplasm. The protein localises to the host nucleus. Functionally, secreted effector that suppresses pattern-triggered immunity (PTI) in plant host. In Plasmopara halstedii (Downy mildew of sunflower), this protein is Secreted RxLR effector protein RXLR-C17.